A 555-amino-acid polypeptide reads, in one-letter code: Coiled-coil domain-containing protein 102A (555 aa).

Disordered stretches follow at residues 1-68 (MSHG…ADGD), 136-202 (LAGA…GSQE), and 214-254 (PEEP…EEDA). Residues Ser-12, Ser-26, and Ser-28 each carry the phosphoserine modification. Residues 37–61 (SLPPTPPSGTPSPGPPPALPLPPTP) are compositionally biased toward pro residues. The stretch at 72-161 (REELRLRELE…ARGRELARLR (90 aa)) forms a coiled coil. Composition is skewed to basic and acidic residues over residues 136–159 (LAGARRERQEAQGESEARGRELAR) and 166–183 (GVDRTPDGPETEPEREQE). The span at 224-236 (RSAGAGAPRGSSG) shows a compositional bias: low complexity. Coiled coils occupy residues 268–401 (QKVL…RRQT) and 432–522 (KLKK…QNAP). The interval 478–555 (ELDEAHNQAR…EDEDLQIQVA (78 aa)) is disordered. A compositionally biased stretch (acidic residues) spans 536 to 555 (EAGDGASDLDEDEDLQIQVA). Ser-542 is modified (phosphoserine).

The protein is Coiled-coil domain-containing protein 102A (CCDC102A) of Bos taurus (Bovine).